We begin with the raw amino-acid sequence, 67 residues long: Non-specific lipid-transfer protein 2 (67 aa).

Cystine bridges form between Cys-3–Cys-35, Cys-11–Cys-25, Cys-26–Cys-61, and Cys-37–Cys-67.

This sequence belongs to the plant LTP family. As to quaternary structure, monomer. Post-translationally, disulfide bonds.

Functionally, plant non-specific lipid-transfer proteins transfer phospholipids as well as galactolipids across membranes. May play a role in wax or cutin deposition in the cell walls of expanding epidermal cells and certain secretory tissues. The protein is Non-specific lipid-transfer protein 2 of Apium graveolens var. rapaceum (Celeriac).